Consider the following 368-residue polypeptide: MLTNSEKSRFFLADLTGEVQSIPNTYGYISNLGLFRSAPITQTTFLMDLTDWDVSLLDAVDRDSRKAETSAPERVRQISFPMMYFKEVESITPDEIQGVRQPGTANELTTEAVVRAKKLMKIRTKFDITREFLFMQALKGKVVDARGTLYADLYKQFDVEKKTIYFDLDNPNADIDASIEELRMHMEDEAKTGTVINGEEIHVVVDRVFFSKLTKHPKIRDAYLAQQTPLAWQQITGSLRTGGADGVQAHMNTFYYGGVKFVQYNGKFKDKRGKVHTLVSIDSVADTVGVGHAFPNVAMLGEANNIFEVAYGPCPKMGYANTLGQELYVFEYEKDRDEGIDFEAHSYMLPYCTRPQLLVDVRADAKGG.

The protein belongs to the lambda phage major capsid protein family. Homomultimer.

The protein resides in the virion. Its subcellular location is the host cytoplasm. In terms of biological role, assembles to form an icosahedral capsid. The assembly is primed by the interaction between capsid assembly protease and portal dodecamer, and major capsid proteins assemble cooperatively to form the procapsid with the help of capsid scaffolding protein. Major capsid protein forms hexons and pentons of the icosahedron. Viral genomic DNA is packaged into the procapsid through the portal vertex. The packaging triggers a dramatic reconfiguration of the capsid shell. The chain is Major capsid protein from Salmonella (Bacteriophage Felix O1).